A 317-amino-acid polypeptide reads, in one-letter code: Ferrochelatase (317 aa).

Fe cation contacts are provided by His184 and Glu259.

Belongs to the ferrochelatase family.

It localises to the cytoplasm. The enzyme catalyses heme b + 2 H(+) = protoporphyrin IX + Fe(2+). The protein operates within porphyrin-containing compound metabolism; protoheme biosynthesis; protoheme from protoporphyrin-IX: step 1/1. Functionally, catalyzes the ferrous insertion into protoporphyrin IX. This chain is Ferrochelatase, found in Chlamydia muridarum (strain MoPn / Nigg).